The sequence spans 364 residues: Fructose-bisphosphate aldolase C (364 aa).

A Phosphotyrosine modification is found at Tyr-5. Phosphoserine is present on residues Ser-36, Ser-39, and Ser-45. Position 56 (Arg-56) interacts with substrate. Residue Lys-111 is modified to N6-acetyllysine. A Phosphoserine modification is found at Ser-132. Lys-147 contacts substrate. Residue Glu-188 is the Proton acceptor of the active site. Lys-230 acts as the Schiff-base intermediate with dihydroxyacetone-P in catalysis.

Belongs to the class I fructose-bisphosphate aldolase family. As to quaternary structure, homotetramer. Interacts with ATP6V1E1. May interact with PLD2.

The enzyme catalyses beta-D-fructose 1,6-bisphosphate = D-glyceraldehyde 3-phosphate + dihydroxyacetone phosphate. Its pathway is carbohydrate degradation; glycolysis; D-glyceraldehyde 3-phosphate and glycerone phosphate from D-glucose: step 4/4. The polypeptide is Fructose-bisphosphate aldolase C (ALDOC) (Homo sapiens (Human)).